Reading from the N-terminus, the 290-residue chain is ATP synthase gamma chain (290 aa).

Belongs to the ATPase gamma chain family. As to quaternary structure, F-type ATPases have 2 components, CF(1) - the catalytic core - and CF(0) - the membrane proton channel. CF(1) has five subunits: alpha(3), beta(3), gamma(1), delta(1), epsilon(1). CF(0) has three main subunits: a, b and c.

It localises to the cell inner membrane. Its function is as follows. Produces ATP from ADP in the presence of a proton gradient across the membrane. The gamma chain is believed to be important in regulating ATPase activity and the flow of protons through the CF(0) complex. In Thiobacillus denitrificans (strain ATCC 25259 / T1), this protein is ATP synthase gamma chain.